We begin with the raw amino-acid sequence, 288 residues long: Ribosomal RNA small subunit methyltransferase A (288 aa).

The S-adenosyl-L-methionine site is built by Asn-28, Leu-30, Gly-55, Glu-76, Asp-101, and Asn-130.

Belongs to the class I-like SAM-binding methyltransferase superfamily. rRNA adenine N(6)-methyltransferase family. RsmA subfamily.

It is found in the cytoplasm. The catalysed reaction is adenosine(1518)/adenosine(1519) in 16S rRNA + 4 S-adenosyl-L-methionine = N(6)-dimethyladenosine(1518)/N(6)-dimethyladenosine(1519) in 16S rRNA + 4 S-adenosyl-L-homocysteine + 4 H(+). In terms of biological role, specifically dimethylates two adjacent adenosines (A1518 and A1519) in the loop of a conserved hairpin near the 3'-end of 16S rRNA in the 30S particle. May play a critical role in biogenesis of 30S subunits. In Moorella thermoacetica (strain ATCC 39073 / JCM 9320), this protein is Ribosomal RNA small subunit methyltransferase A.